Consider the following 343-residue polypeptide: 3-hydroxy-3-methylglutaryl-CoA lyase, cytoplasmic (343 aa).

Glycine 2 is lipidated: N-myristoyl glycine. One can recognise a Pyruvate carboxyltransferase domain in the interval 48–315 (VKIVEVGPRD…NTGVDLYKVM (268 aa)). Arginine 56 provides a ligand contact to substrate. A divalent metal cation is bound by residues aspartate 57, histidine 248, and histidine 250. Cysteine 281 is an active-site residue. Position 290 (asparagine 290) interacts with a divalent metal cation.

It belongs to the HMG-CoA lyase family. It depends on a divalent metal cation as a cofactor.

It localises to the cytoplasm. The protein resides in the cytosol. It is found in the endoplasmic reticulum membrane. It carries out the reaction (3S)-3-hydroxy-3-methylglutaryl-CoA = acetoacetate + acetyl-CoA. It functions in the pathway metabolic intermediate metabolism; (S)-3-hydroxy-3-methylglutaryl-CoA degradation; acetoacetate from (S)-3-hydroxy-3-methylglutaryl-CoA: step 1/1. Its function is as follows. Non-mitochondrial 3-hydroxy-3-methylglutaryl-CoA lyase that catalyzes a cation-dependent cleavage of (S)-3-hydroxy-3-methylglutaryl-CoA into acetyl-CoA and acetoacetate, a key step in ketogenesis, the products of which support energy production in nonhepatic animal tissues. This is 3-hydroxy-3-methylglutaryl-CoA lyase, cytoplasmic (Hmgcll1) from Mus musculus (Mouse).